Consider the following 148-residue polypeptide: MRSIMINTIQLGQRYLETYPNQKKLALFMPDYRLIRLVKQAARFMPIFACFAILWQYFFTDPTQSILANAIITSLFAISLPYQGLYWLGKRANTPLPLSLLDWYQSLKQKLISEQKIMQDQAVPSYQDFANLLKLAEETWGDNYFNEL.

2 helical membrane passes run Ala-41–Thr-60 and Ile-66–Leu-88.

The protein belongs to the UPF0208 family.

It localises to the cell inner membrane. This chain is UPF0208 membrane protein HD_1715, found in Haemophilus ducreyi (strain 35000HP / ATCC 700724).